The following is a 42-amino-acid chain: Statherin (42 aa).

The hydroxyapatite-binding; inhibits crystal growth stretch occupies residues 1 to 6; sequence DSSEEK. Phosphoserine occurs at positions 2 and 3. Residues 18–42 are disordered; the sequence is RYGPYQPFVPPPLYPQPYQPYQPQY. The interval 18-42 is hydrophobic; inhibits precipitation of calcium phosphate salts; the sequence is RYGPYQPFVPPPLYPQPYQPYQPQY. Pro residues predominate over residues 24 to 42; sequence PFVPPPLYPQPYQPYQPQY.

The protein belongs to the histatin/statherin family. In terms of tissue distribution, secreted by parotid and submandibular glands.

The protein resides in the secreted. Salivary protein that stabilizes saliva supersaturated with calcium salts by inhibiting the precipitation of calcium phosphate salts. It also modulates hydroxyapatite crystal formation on the tooth surface. The sequence is that of Statherin (STATH) from Macaca arctoides (Stump-tailed macaque).